Consider the following 950-residue polypeptide: Oxysterol-binding protein-related protein 1 (950 aa).

Positions 1-237 (MNTEAEQQLL…NKVVHKALKR (237 aa)) are interaction with RAB7A. ANK repeat units follow at residues 47 to 76 (LGWTPLHLACYFGHKQVVQDLLKAGAKVNM), 80 to 109 (MGDTPLHRAAFTGRKELVMLLLEYNADTTV), and 175 to 204 (LGNTPLHCAAYRAHKQCVLKLLRSGADPSL). The PH domain maps to 235–334 (LKRFEGPLWK…WLEAIEEHSA (100 aa)). Residues 430–463 (NFKLEQEQEKNKILSEALETLATEHHELERSLVE) adopt a coiled-coil conformation. Positions 469–483 (SILSEDEFYDALSGS) match the FFAT motif. Disordered regions lie at residues 795-821 (KKNTEEKKTSKQASTSEESDEMPVPDS) and 881-913 (MENGEIDQASEEKKRLEEKQRAARKNRSKSEED). Residues 877 to 913 (DIRAMENGEIDQASEEKKRLEEKQRAARKNRSKSEED) adopt a coiled-coil conformation. Residues 890–901 (SEEKKRLEEKQR) show a composition bias toward basic and acidic residues.

It belongs to the OSBP family. In terms of assembly, interacts (via FFAT motif) with VAPA. Interacts (via FFAT motif) with VAPB. Interacts with the GTP-bound form of RAB7A. Interacts with OAS1B. Interacts (via FFAT motif) with MOSPD2 (via MSP domain). Detected in prostate and liver.

The protein resides in the late endosome. Binds phospholipids; exhibits strong binding to phosphatidic acid and weak binding to phosphatidylinositol 3-phosphate. Stabilizes GTP-bound RAB7A on late endosomes/lysosomes and alters functional properties of late endocytic compartments via its interaction with RAB7A. Binds 25-hydroxycholesterol and cholesterol. The protein is Oxysterol-binding protein-related protein 1 of Rattus norvegicus (Rat).